The sequence spans 319 residues: Beta-ketoacyl-[acyl-carrier-protein] synthase III (319 aa).

Residues C113 and H246 contribute to the active site. The tract at residues 247–251 (QANIR) is ACP-binding. N276 is a catalytic residue.

The protein belongs to the thiolase-like superfamily. FabH family. As to quaternary structure, homodimer.

It is found in the cytoplasm. It carries out the reaction malonyl-[ACP] + acetyl-CoA + H(+) = 3-oxobutanoyl-[ACP] + CO2 + CoA. It participates in lipid metabolism; fatty acid biosynthesis. Catalyzes the condensation reaction of fatty acid synthesis by the addition to an acyl acceptor of two carbons from malonyl-ACP. Catalyzes the first condensation reaction which initiates fatty acid synthesis and may therefore play a role in governing the total rate of fatty acid production. Possesses both acetoacetyl-ACP synthase and acetyl transacylase activities. Its substrate specificity determines the biosynthesis of branched-chain and/or straight-chain of fatty acids. The sequence is that of Beta-ketoacyl-[acyl-carrier-protein] synthase III from Ehrlichia chaffeensis (strain ATCC CRL-10679 / Arkansas).